Consider the following 229-residue polypeptide: Tubulin-specific chaperone B (229 aa).

Positions 170–212 (GATKFKEGVWVGVKYDEPVGKNDGSVAGVRYFDCDPKYGGFVR) constitute a CAP-Gly domain.

The protein belongs to the TBCB family. In terms of assembly, supercomplex made of cofactors A to E. Cofactors A and D function by capturing and stabilizing tubulin in a quasi-native conformation. Cofactor E binds to the cofactor D-tubulin complex; interaction with cofactor C then causes the release of tubulin polypeptides that are committed to the native state.

It is found in the cytoplasm. The protein resides in the cytoskeleton. Binds to alpha-tubulin folding intermediates after their interaction with cytosolic chaperonin in the pathway leading from newly synthesized tubulin to properly folded heterodimer. The polypeptide is Tubulin-specific chaperone B (Caenorhabditis elegans).